Reading from the N-terminus, the 670-residue chain is DNA ligase (670 aa).

Residues 34–38 (DAEYD), 83–84 (SL), and Glu117 contribute to the NAD(+) site. The active-site N6-AMP-lysine intermediate is the Lys119. Residues Arg140, Glu177, Lys293, and Lys317 each coordinate NAD(+). Zn(2+) is bound by residues Cys411, Cys414, Cys429, and Cys434. Residues 591–670 (KVGGRFTGKT…DEFLAMLEEG (80 aa)) form the BRCT domain.

The protein belongs to the NAD-dependent DNA ligase family. LigA subfamily. Mg(2+) serves as cofactor. The cofactor is Mn(2+).

It carries out the reaction NAD(+) + (deoxyribonucleotide)n-3'-hydroxyl + 5'-phospho-(deoxyribonucleotide)m = (deoxyribonucleotide)n+m + AMP + beta-nicotinamide D-nucleotide.. Its function is as follows. DNA ligase that catalyzes the formation of phosphodiester linkages between 5'-phosphoryl and 3'-hydroxyl groups in double-stranded DNA using NAD as a coenzyme and as the energy source for the reaction. It is essential for DNA replication and repair of damaged DNA. The sequence is that of DNA ligase from Geobacter sulfurreducens (strain ATCC 51573 / DSM 12127 / PCA).